The following is a 1190-amino-acid chain: Laminin subunit gamma-2 (1190 aa).

An N-terminal signal peptide occupies residues 1–21 (MPALWLRCGLCLALLLPAARA). Cystine bridges form between C28–C37, C30–C53, C56–C65, C68–C81, C84–C96, C86–C102, C104–C113, C116–C128, C139–C150, C141–C155, C157–C166, and C169–C184. 3 Laminin EGF-like domains span residues 28–83 (CDCN…RCLP), 84–130 (CNCN…GCAQ), and 139–186 (CDCD…GCTQ). In terms of domain architecture, Laminin EGF-like 4; first part spans 187–196 (CFCYGHSASC). Residues 213–381 (QDVDGWKAVQ…SGAPAPWVEQ (169 aa)) enclose the Laminin IV type A domain. Residues N342 and N362 are each glycosylated (N-linked (GlcNAc...) asparagine). In terms of domain architecture, Laminin EGF-like 4; second part spans 382 to 415 (CVCPVGYKGQFCQDCASGYKRDSARLGPFGTCIP). Laminin EGF-like domains follow at residues 416 to 462 (CNCQ…SCKP), 463 to 517 (CPCR…PCQP), and 518 to 573 (CQCN…KCRA). Disulfide bonds link C463–C471, C465–C482, C485–C494, C497–C515, C518–C532, C520–C539, C542–C551, C554–C571, C574–C586, C576–C592, and C594–C603. Residues 574–603 (CNCNPVGSEPVECRSDGSCVCKPGFGGLSC) form the Laminin EGF-like 8; truncated domain. The domain II and I stretch occupies residues 604-1190 (EHAALTSCPA…CYNTQALEQQ (587 aa)). The stretch at 613–718 (ACYNQVKVQM…GSQYQNQVQD (106 aa)) forms a coiled coil. The O-linked (Xyl...) (chondroitin sulfate) serine glycan is linked to S803. Coiled-coil stretches lie at residues 809-1073 (AVVQ…AVQM) and 1114-1190 (EERL…LEQQ). 2 N-linked (GlcNAc...) asparagine glycosylation sites follow: N939 and N1030.

As to quaternary structure, laminin is a complex glycoprotein, consisting of three different polypeptide chains (alpha, beta, gamma), which are bound to each other by disulfide bonds into a cross-shaped molecule comprising one long and three short arms with globules at each end. Gamma-2 is a subunit of laminin-5 (laminin-332 or epiligrin/kalinin/nicein). Post-translationally, O-glycosylated; contains chondroitin sulfate (CS).

The protein resides in the secreted. It is found in the extracellular space. The protein localises to the extracellular matrix. It localises to the basement membrane. Functionally, binding to cells via a high affinity receptor, laminin is thought to mediate the attachment, migration and organization of cells into tissues during embryonic development by interacting with other extracellular matrix components. Ladsin exerts cell-scattering activity toward a wide variety of cells, including epithelial, endothelial, and fibroblastic cells. The chain is Laminin subunit gamma-2 (LAMC2) from Equus caballus (Horse).